Here is a 255-residue protein sequence, read N- to C-terminus: Spectinomycin 9-adenylyltransferase (255 aa).

The catalysed reaction is spectinomycin + ATP = 9-O-adenylylspectinomycin + diphosphate. In terms of biological role, mediates bacterial resistance to the antibiotic spectinomycin but not streptomycin. This chain is Spectinomycin 9-adenylyltransferase, found in Enterococcus faecalis (Streptococcus faecalis).